A 467-amino-acid chain; its full sequence is Glutamate--tRNA ligase (467 aa).

Positions 9-19 (PSPTGYLHIGG) match the 'HIGH' region motif. The short motif at 237–241 (KLSKR) is the 'KMSKS' region element. Lys240 provides a ligand contact to ATP.

The protein belongs to the class-I aminoacyl-tRNA synthetase family. Glutamate--tRNA ligase type 1 subfamily. In terms of assembly, monomer.

The protein localises to the cytoplasm. The catalysed reaction is tRNA(Glu) + L-glutamate + ATP = L-glutamyl-tRNA(Glu) + AMP + diphosphate. Functionally, catalyzes the attachment of glutamate to tRNA(Glu) in a two-step reaction: glutamate is first activated by ATP to form Glu-AMP and then transferred to the acceptor end of tRNA(Glu). The protein is Glutamate--tRNA ligase of Xanthomonas axonopodis pv. citri (strain 306).